We begin with the raw amino-acid sequence, 237 residues long: Carbohydrate deacetylase (237 aa).

Residues His59 and His125 each coordinate Mg(2+).

It belongs to the YdjC deacetylase family. The cofactor is Mg(2+).

In terms of biological role, probably catalyzes the deacetylation of acetylated carbohydrates an important step in the degradation of oligosaccharides. This is Carbohydrate deacetylase from Halalkalibacterium halodurans (strain ATCC BAA-125 / DSM 18197 / FERM 7344 / JCM 9153 / C-125) (Bacillus halodurans).